We begin with the raw amino-acid sequence, 184 residues long: GTP cyclohydrolase 1 (184 aa).

Positions 75, 78, and 146 each coordinate Zn(2+).

This sequence belongs to the GTP cyclohydrolase I family. As to quaternary structure, toroid-shaped homodecamer, composed of two pentamers of five dimers.

The enzyme catalyses GTP + H2O = 7,8-dihydroneopterin 3'-triphosphate + formate + H(+). The protein operates within cofactor biosynthesis; 7,8-dihydroneopterin triphosphate biosynthesis; 7,8-dihydroneopterin triphosphate from GTP: step 1/1. This is GTP cyclohydrolase 1 from Streptococcus sanguinis (strain SK36).